Consider the following 1028-residue polypeptide: Contactin-3 (1028 aa).

An N-terminal signal peptide occupies residues 1–19 (MMFPWKQLILLSFIGCLGG). 6 Ig-like C2-type domains span residues 26 to 117 (PVFI…AKLQ), 122 to 208 (ENFK…ARVL), 227 to 313 (PKIE…GRLT), 318 to 402 (PHWV…AELK), 408 to 497 (PDFS…LVVT), and 499 to 593 (PTRI…ADLI). 5 disulfide bridges follow: Cys50–Cys100, Cys144–Cys196, Cys249–Cys297, Cys339–Cys386, and Cys431–Cys479. Residues Asn65 and Asn193 are each glycosylated (N-linked (GlcNAc...) asparagine). Residues Asn375, Asn468, and Asn489 are each glycosylated (N-linked (GlcNAc...) asparagine). Cys521 and Cys577 are disulfide-bonded. 4 consecutive Fibronectin type-III domains span residues 600-698 (PPEN…TEEA), 703-800 (PPSE…SAEE), 805-901 (APSQ…TKKT), and 902-998 (PPSQ…TSMD). Residues 684-713 (GEPSLPSEKVRTEEAVPEVPPSEVNGGGGS) are disordered. 6 N-linked (GlcNAc...) asparagine glycosylation sites follow: Asn765, Asn860, Asn895, Asn913, Asn931, and Asn956. Residue Ser1002 is the site of GPI-anchor amidated serine attachment. The propeptide at 1003–1028 (TSAISNVHPMSSYMPIVLFLIVYVLW) is removed in mature form.

Belongs to the immunoglobulin superfamily. Contactin family. As to quaternary structure, interacts with PTPRG. In brain, it is expressed in frontal lobe, occipital lobe, cerebellum and amygdala.

The protein resides in the cell membrane. Contactins mediate cell surface interactions during nervous system development. Has some neurite outgrowth-promoting activity. This chain is Contactin-3 (CNTN3), found in Homo sapiens (Human).